The sequence spans 308 residues: Protoheme IX farnesyltransferase (308 aa).

9 helical membrane-spanning segments follow: residues 20–40, 53–73, 102–122, 124–144, 149–169, 170–190, 227–249, 254–276, and 288–308; these read VLAY…VTAI, PLLI…ANTF, NALV…WWTT, LLSG…YTLL, TSQN…IGWS, AITD…FFWT, LIYT…WLYM, VAGA…GEPV, and YLAV…PTLF.

It belongs to the UbiA prenyltransferase family. Protoheme IX farnesyltransferase subfamily.

It is found in the cell membrane. The enzyme catalyses heme b + (2E,6E)-farnesyl diphosphate + H2O = Fe(II)-heme o + diphosphate. Its pathway is porphyrin-containing compound metabolism; heme O biosynthesis; heme O from protoheme: step 1/1. Its function is as follows. Converts heme B (protoheme IX) to heme O by substitution of the vinyl group on carbon 2 of heme B porphyrin ring with a hydroxyethyl farnesyl side group. The protein is Protoheme IX farnesyltransferase of Mycobacterium leprae (strain TN).